Reading from the N-terminus, the 159-residue chain is Betainyl-CoA thioesterase (159 aa).

This sequence belongs to the betainyl-CoA thioesterase family.

It carries out the reaction N,N,N-trimethylglycyl-CoA + H2O = glycine betaine + CoA + H(+). It functions in the pathway amine and polyamine metabolism; carnitine metabolism. Functionally, catalyzes the cleavage of betainyl-CoA (N,N,N-trimethylglycyl-CoA) into glycine betaine and coenzyme A. Is involved in a L-carnitine degradation pathway that allows P.aeruginosa to grow on L-carnitine as the sole source of carbon and nitrogen. The polypeptide is Betainyl-CoA thioesterase (Pseudomonas aeruginosa (strain ATCC 15692 / DSM 22644 / CIP 104116 / JCM 14847 / LMG 12228 / 1C / PRS 101 / PAO1)).